Here is an 894-residue protein sequence, read N- to C-terminus: Protein NLP9 (894 aa).

Residues glutamine 517–glycine 603 form the RWP-RK domain. Positions arginine 578–glutamine 598 form a coiled coil. The segment at asparagine 732–leucine 763 is disordered. Over residues serine 747 to leucine 763 the composition is skewed to low complexity. One can recognise a PB1 domain in the interval threonine 792 to isoleucine 875.

Its subcellular location is the nucleus. Its function is as follows. Probable transcription factor. The protein is Protein NLP9 (NLP9) of Arabidopsis thaliana (Mouse-ear cress).